The sequence spans 76 residues: Exodeoxyribonuclease 7 small subunit (76 aa).

This sequence belongs to the XseB family. Heterooligomer composed of large and small subunits.

It localises to the cytoplasm. The enzyme catalyses Exonucleolytic cleavage in either 5'- to 3'- or 3'- to 5'-direction to yield nucleoside 5'-phosphates.. Bidirectionally degrades single-stranded DNA into large acid-insoluble oligonucleotides, which are then degraded further into small acid-soluble oligonucleotides. In Geotalea uraniireducens (strain Rf4) (Geobacter uraniireducens), this protein is Exodeoxyribonuclease 7 small subunit.